The primary structure comprises 193 residues: ECF RNA polymerase sigma factor SigK (193 aa).

The tract at residues 35 to 101 (LYDRTRSRVY…RRAVDRVRSE (67 aa)) is sigma-70 factor domain-2. The short motif at 59–62 (ETTQ) is the Polymerase core binding element. The segment at 140–187 (MGSLSDLQREAIQLAYYEGLTYVQVSERLSANLATIKSRMRGGIRGLK) is sigma-70 factor domain-4. Residues 161–180 (YVQVSERLSANLATIKSRMR) constitute a DNA-binding region (H-T-H motif).

It belongs to the sigma-70 factor family. ECF subfamily. As to quaternary structure, interacts transiently with the RNA polymerase catalytic core formed by RpoA, RpoB, RpoC and RpoZ (2 alpha, 1 beta, 1 beta' and 1 omega subunit) to form the RNA polymerase holoenzyme that can initiate transcription. Interacts (via sigma-70 factor domain 4) with anti-sigma-K factor RskA.

Sigma factors are initiation factors that promote the attachment of RNA polymerase to specific initiation sites and are then released. Extracytoplasmic function (ECF) sigma factors are held in an inactive form by an anti-sigma factor until released by regulated intramembrane proteolysis. The sequence is that of ECF RNA polymerase sigma factor SigK (sigK) from Mycobacterium sp. (strain KMS).